We begin with the raw amino-acid sequence, 187 residues long: Cell division protein SepF (187 aa).

A disordered region spans residues 21-97 (EVEVPDKQQQ…ATPNNASQES (77 aa)). Composition is skewed to polar residues over residues 38–63 (EQSQQTTKQNAIKSVPQKSASRYTTT) and 70–97 (RMSNYSKNNSRNVVTMNNATPNNASQES).

The protein belongs to the SepF family. As to quaternary structure, homodimer. Interacts with FtsZ.

The protein localises to the cytoplasm. Cell division protein that is part of the divisome complex and is recruited early to the Z-ring. Probably stimulates Z-ring formation, perhaps through the cross-linking of FtsZ protofilaments. Its function overlaps with FtsA. The chain is Cell division protein SepF from Staphylococcus aureus (strain Mu3 / ATCC 700698).